The following is a 347-amino-acid chain: Glucose 1-dehydrogenase (347 aa).

Cysteine 39 serves as a coordination point for Zn(2+). A substrate-binding site is contributed by threonine 41. Residues histidine 64 and glutamate 65 each coordinate Zn(2+). Glutamate 110 and glutamate 146 together coordinate substrate. Position 146 (glutamate 146) interacts with Zn(2+). NADP(+) is bound by residues 178-181 (AGPV), 260-262 (LGV), and 289-291 (SVN). Residue asparagine 291 participates in substrate binding.

This sequence belongs to the zinc-containing alcohol dehydrogenase family. Glucose 1-dehydrogenase subfamily. Homodimer. Zn(2+) is required as a cofactor.

It catalyses the reaction D-glucose + NAD(+) = D-glucono-1,5-lactone + NADH + H(+). The catalysed reaction is D-glucose + NADP(+) = D-glucono-1,5-lactone + NADPH + H(+). Catalyzes the NAD(P)(+)-dependent oxidation of D-glucose to D-gluconate via gluconolactone. To a lesser extent, is also active with xylose as substrate, but mannose, arabinose, galactose, fructose 6-phosphate, glucose 6-phosphate, glycerinaldehyde 3-phosphate, ribose, sorbitol, ethanol, erythritol, or lactose are not oxidized by the enzyme. Can utilize both NAD(+) and NADP(+) as electron acceptor, with a marked preference for NADP(+). Is involved in the degradation of glucose through a non-phosphorylative variant of the Entner-Doudoroff pathway. The chain is Glucose 1-dehydrogenase (gdh) from Thermoproteus tenax (strain ATCC 35583 / DSM 2078 / JCM 9277 / NBRC 100435 / Kra 1).